The primary structure comprises 329 residues: ATP-dependent (S)-NAD(P)H-hydrate dehydratase (329 aa).

The transit peptide at 1–28 directs the protein to the mitochondrion; it reads MALGPGCRAVRGCRPVLKRAFSLHKAHS. The YjeF C-terminal domain maps to 35–326; that stretch reads ILQLVRSVVP…AEVGPAFRRL (292 aa). N6-acetyllysine is present on Lys-49. Position 67 is a phosphotyrosine (Tyr-67). Residues Gly-135 and 188-194 each bind (6S)-NADPHX; that span reads NHVEFGR. ATP contacts are provided by residues 228 to 232 and 247 to 256; these read KGEQD and GSGRRCGGQG. Asp-257 serves as a coordination point for (6S)-NADPHX.

It belongs to the NnrD/CARKD family. Mg(2+) serves as cofactor.

It localises to the mitochondrion. It catalyses the reaction (6S)-NADHX + ATP = ADP + phosphate + NADH + H(+). It carries out the reaction (6S)-NADPHX + ATP = ADP + phosphate + NADPH + H(+). In terms of biological role, catalyzes the dehydration of the S-form of NAD(P)HX at the expense of ATP, which is converted to ADP. Together with NAD(P)HX epimerase, which catalyzes the epimerization of the S- and R-forms, the enzyme allows the repair of both epimers of NAD(P)HX, a damaged form of NAD(P)H that is a result of enzymatic or heat-dependent hydration. This is ATP-dependent (S)-NAD(P)H-hydrate dehydratase from Bos taurus (Bovine).